A 333-amino-acid polypeptide reads, in one-letter code: Thiamine-monophosphate kinase (333 aa).

Residues aspartate 35, threonine 50, and aspartate 51 each contribute to the Mg(2+) site. Residue histidine 58 participates in substrate binding. Aspartate 80 serves as a coordination point for Mg(2+). ATP-binding positions include tyrosine 111, 128–129, and arginine 153; that span reads GD. Aspartate 129 contacts Mg(2+). Position 230 (aspartate 230) interacts with Mg(2+). Position 232 (serine 232) interacts with ATP. Aspartate 233 serves as a coordination point for Mg(2+). Substrate is bound by residues glutamate 278 and phenylalanine 330.

It belongs to the thiamine-monophosphate kinase family.

The catalysed reaction is thiamine phosphate + ATP = thiamine diphosphate + ADP. It participates in cofactor biosynthesis; thiamine diphosphate biosynthesis; thiamine diphosphate from thiamine phosphate: step 1/1. Catalyzes the ATP-dependent phosphorylation of thiamine-monophosphate (TMP) to form thiamine-pyrophosphate (TPP), the active form of vitamin B1. In Prochlorococcus marinus (strain SARG / CCMP1375 / SS120), this protein is Thiamine-monophosphate kinase.